The sequence spans 672 residues: Segment polarity protein dishevelled homolog mig-5 (672 aa).

The DIX domain occupies cysteine 9–threonine 91. Disordered stretches follow at residues leucine 97–tyrosine 127, tyrosine 150–tyrosine 174, and aspartate 187–serine 215. Positions proline 98–glutamine 108 are enriched in polar residues. Residues tyrosine 160 to aspartate 169 show a composition bias toward basic and acidic residues. A compositionally biased stretch (basic residues) spans arginine 191 to arginine 202. The 69-residue stretch at glutamate 226–alanine 294 folds into the PDZ domain. The region spanning proline 427–aspartate 501 is the DEP domain. The segment at lysine 604–threonine 672 is disordered. Polar residues predominate over residues glutamate 660–threonine 672.

Belongs to the DSH family.

The protein resides in the cytoplasm. It is found in the cell cortex. It localises to the cell membrane. Its subcellular location is the cell junction. Its function is as follows. Plays a role in the signal transduction pathways mediated by multiple Wnt genes. Functions redundantly with other dishevelled family members throughout development. During embryonic and larval development, controls cell migration and/or cell fate specification of hypodermal cells, hypodermal seam cells, vulval precursor cells and, through distal tip cell migration, somatic gonad precursor cells. In early embryos, regulates the orientation of the mitotic spindle of blastomeres and specifically, along with dsh-2, is required for the correct mitotic spindle orientation of the ABar blastomere division plane. Controls the polarity and the asymmetric localization of downstream components of the wnt/beta-catenin asymmetry pathway, and in particular, controls the asymmetric localization of the wnt receptor lin-17/Frizzled in ectodermal blast B cells. May act redundantly with dsh-2 to regulate the expression and nuclear localization of the beta-catenin homolog wrm-2, but alone seems to be required for the polarity of wrm-2 during the asymmetric cell division of hypodermal seam cells. Also, maintains the polarity and migration of QL neuroblasts in larvae. During the embryonic development of touch receptor neurons, may act redundantly with dsh-1, downstream of wnt signaling ligands and the wnt receptor lin-17/Frizzled, to direct the growth of neurites of touch receptor neurons towards the anterior of the body of the worm and towards the PLM touch receptor neuron and other tail neurons. May play a role in the guidance of posterior D-type motor neuron axons along the anteroposterior axis. This is Segment polarity protein dishevelled homolog mig-5 from Caenorhabditis elegans.